Consider the following 185-residue polypeptide: ATP synthase subunit delta (185 aa).

Belongs to the ATPase delta chain family. F-type ATPases have 2 components, F(1) - the catalytic core - and F(0) - the membrane proton channel. F(1) has five subunits: alpha(3), beta(3), gamma(1), delta(1), epsilon(1). CF(0) has four main subunits: a(1), b(1), b'(1) and c(10-14). The alpha and beta chains form an alternating ring which encloses part of the gamma chain. F(1) is attached to F(0) by a central stalk formed by the gamma and epsilon chains, while a peripheral stalk is formed by the delta, b and b' chains.

It localises to the cellular thylakoid membrane. In terms of biological role, f(1)F(0) ATP synthase produces ATP from ADP in the presence of a proton or sodium gradient. F-type ATPases consist of two structural domains, F(1) containing the extramembraneous catalytic core and F(0) containing the membrane proton channel, linked together by a central stalk and a peripheral stalk. During catalysis, ATP synthesis in the catalytic domain of F(1) is coupled via a rotary mechanism of the central stalk subunits to proton translocation. Functionally, this protein is part of the stalk that links CF(0) to CF(1). It either transmits conformational changes from CF(0) to CF(1) or is implicated in proton conduction. The protein is ATP synthase subunit delta of Cyanothece sp. (strain PCC 7425 / ATCC 29141).